Reading from the N-terminus, the 434-residue chain is 3-phosphoshikimate 1-carboxyvinyltransferase (434 aa).

Lys22, Ser23, and Arg27 together coordinate 3-phosphoshikimate. Phosphoenolpyruvate is bound at residue Lys22. Phosphoenolpyruvate-binding residues include Gly93 and Arg121. 3-phosphoshikimate contacts are provided by Ser168, Ser169, Gln170, Ser199, Asp320, and Lys347. Gln170 contributes to the phosphoenolpyruvate binding site. The Proton acceptor role is filled by Asp320. Phosphoenolpyruvate contacts are provided by Arg351, Arg394, and Lys419.

This sequence belongs to the EPSP synthase family. As to quaternary structure, monomer.

The protein localises to the cytoplasm. The catalysed reaction is 3-phosphoshikimate + phosphoenolpyruvate = 5-O-(1-carboxyvinyl)-3-phosphoshikimate + phosphate. It functions in the pathway metabolic intermediate biosynthesis; chorismate biosynthesis; chorismate from D-erythrose 4-phosphate and phosphoenolpyruvate: step 6/7. Functionally, catalyzes the transfer of the enolpyruvyl moiety of phosphoenolpyruvate (PEP) to the 5-hydroxyl of shikimate-3-phosphate (S3P) to produce enolpyruvyl shikimate-3-phosphate and inorganic phosphate. This is 3-phosphoshikimate 1-carboxyvinyltransferase from Burkholderia orbicola (strain AU 1054).